We begin with the raw amino-acid sequence, 287 residues long: Survival motor neuron protein (287 aa).

The disordered stretch occupies residues 1–27 (MGGGGGLPEPEDSVLFRRGTGQSDDSD). The tract at residues 8–39 (PEPEDSVLFRRGTGQSDDSDIWDDTALIKAYD) is P1 (binding site for GEMIN2). Thr-20 is subject to Phosphothreonine. A phosphoserine mark is found at Ser-23 and Ser-26. Lys-46 is covalently cross-linked (Glycyl lysine isopeptide (Lys-Gly) (interchain with G-Cter in SUMO2)). A disordered region spans residues 52 to 83 (GDISEASDKPKSTPKRKPAKKNKSQKKNATTA). A compositionally biased stretch (basic residues) spans 63 to 77 (STPKRKPAKKNKSQK). Residue Thr-64 is modified to Phosphothreonine. The region spanning 86–146 (QWKVGDKCSA…LSPACEVANN (61 aa)) is the Tudor domain. Residues 92–205 (KCSAVWSEDG…MSGSGLGPGK (114 aa)) form a required for interaction with RPP20/POP7 region. The disordered stretch occupies residues 148-216 (EQDTQENENE…GVKFSGPPPP (69 aa)). Polar residues predominate over residues 157-180 (ESQISTDESENSSRSPGNKPNNIK). A Glycyl lysine isopeptide (Lys-Gly) (interchain with G-Cter in SUMO2) cross-link involves residue Lys-205. Residues 234 to 261 (PPIIPPPPPICPDSLDDADALGSMLISW) form a P2 (binding site for SM B) region. The tract at residues 273–287 (GFKQNQKEGRCSHFN) is required for interaction with SYNCRIP.

The protein belongs to the SMN family. As to quaternary structure, homooligomer; may form higher order homooligomers in the dimer to octamer range. Part of the core SMN complex that contains SMN1, GEMIN2/SIP1, DDX20/GEMIN3, GEMIN4, GEMIN5, GEMIN6, GEMIN7, GEMIN8 and STRAP/UNRIP. Part of the SMN-Sm complex that contains SMN1, GEMIN2/SIP1, DDX20/GEMIN3, GEMIN4, GEMIN5, GEMIN6, GEMIN7, GEMIN8, STRAP/UNRIP and the Sm proteins SNRPB, SNRPD1, SNRPD2, SNRPD3, SNRPE, SNRPF and SNRPG. Component of an import snRNP complex composed of KPNB1, RNUT1, SMN1 and ZNF259. Interacts with DDX20, FBL, NOLA1, RNUT1, SYNCRIP and with several spliceosomal snRNP core Sm proteins, including SNRPB, SNRPD1, SNRPD2, SNRPD3, SNRPE and ILF3. Interacts with GEMIN2; the interaction is direct. Interacts with GEMIN3; the interaction is direct. Interacts with GEMIN8; the interaction is direct. Interacts with SNRPB; the interaction is direct. Interacts (via Tudor domain) with SNRPD1 (via C-terminus); the interaction is direct. Interacts with SNRPD2; the interaction is direct. Interacts (via Tudor domain) with SNRPD3 (via C-terminus); the interaction is direct. Interacts with SNRPE; the interaction is direct. Interacts with OSTF1, LSM10, LSM11 and RPP20/POP7. Interacts (via C-terminal region) with ZPR1 (via C-terminal region). Interacts (via Tudor domain) with COIL. Interacts with SETX; recruits SETX to POLR2A. Interacts with POLR2A (via the C-terminal domain (CTD)). Interacts with PRMT5. Interacts with XRN2. Interacts (via C-terminus) with FMR1 (via C-terminus); the interaction is direct and occurs in a RNA-independent manner. Interacts (via Tudor domain) with SF3B2 ('Arg-508'-methylated form). Interacts with WRAP53/TCAB1. Interacts (via Tudor domain) with ELAVL4 in an RNA-independent manner; the interaction is required for localization of ELAVL4 to RNA granules. Interacts with FRG1.

It localises to the nucleus. It is found in the gem. The protein localises to the cajal body. The protein resides in the cytoplasm. Its subcellular location is the cytoplasmic granule. It localises to the perikaryon. It is found in the cell projection. The protein localises to the neuron projection. The protein resides in the axon. Its subcellular location is the myofibril. It localises to the sarcomere. It is found in the z line. The SMN complex catalyzes the assembly of small nuclear ribonucleoproteins (snRNPs), the building blocks of the spliceosome, and thereby plays an important role in the splicing of cellular pre-mRNAs. Most spliceosomal snRNPs contain a common set of Sm proteins SNRPB, SNRPD1, SNRPD2, SNRPD3, SNRPE, SNRPF and SNRPG that assemble in a heptameric protein ring on the Sm site of the small nuclear RNA to form the core snRNP (Sm core). In the cytosol, the Sm proteins SNRPD1, SNRPD2, SNRPE, SNRPF and SNRPG are trapped in an inactive 6S pICln-Sm complex by the chaperone CLNS1A that controls the assembly of the core snRNP. To assemble core snRNPs, the SMN complex accepts the trapped 5Sm proteins from CLNS1A forming an intermediate. Binding of snRNA inside 5Sm ultimately triggers eviction of the SMN complex, thereby allowing binding of SNRPD3 and SNRPB to complete assembly of the core snRNP. Within the SMN complex, SMN1 acts as a structural backbone and together with GEMIN2 it gathers the Sm complex subunits. Ensures the correct splicing of U12 intron-containing genes that may be important for normal motor and proprioceptive neurons development. Also required for resolving RNA-DNA hybrids created by RNA polymerase II, that form R-loop in transcription terminal regions, an important step in proper transcription termination. May also play a role in the metabolism of small nucleolar ribonucleoprotein (snoRNPs). In Canis lupus familiaris (Dog), this protein is Survival motor neuron protein (SMN1).